We begin with the raw amino-acid sequence, 232 residues long: 6-phosphogluconolactonase (232 aa).

Belongs to the glucosamine/galactosamine-6-phosphate isomerase family. 6-phosphogluconolactonase subfamily.

It catalyses the reaction 6-phospho-D-glucono-1,5-lactone + H2O = 6-phospho-D-gluconate + H(+). It participates in carbohydrate degradation; pentose phosphate pathway; D-ribulose 5-phosphate from D-glucose 6-phosphate (oxidative stage): step 2/3. Functionally, hydrolysis of 6-phosphogluconolactone to 6-phosphogluconate. This chain is 6-phosphogluconolactonase (pgl), found in Aggregatibacter actinomycetemcomitans (Actinobacillus actinomycetemcomitans).